A 306-amino-acid polypeptide reads, in one-letter code: uncharacterized protein (306 aa).

The protein to M.jannaschii MJ0658.

This is an uncharacterized protein from Methanothermobacter thermautotrophicus (strain ATCC 29096 / DSM 1053 / JCM 10044 / NBRC 100330 / Delta H) (Methanobacterium thermoautotrophicum).